We begin with the raw amino-acid sequence, 611 residues long: Probable cysteine desulfurase 1 (611 aa).

The interval 1–208 (MRATQLYAAS…HEMVDVFDIQ (208 aa)) is cargo-loading domain. Lysine 428 carries the post-translational modification N6-(pyridoxal phosphate)lysine. Cysteine 566 acts as the Cysteine persulfide intermediate in catalysis.

This sequence belongs to the class-V pyridoxal-phosphate-dependent aminotransferase family. Csd subfamily. In terms of assembly, there are 1-2 copies of this protein in each type 2A encapsulin shell. It depends on pyridoxal 5'-phosphate as a cofactor.

The protein localises to the encapsulin nanocompartment. The enzyme catalyses (sulfur carrier)-H + L-cysteine = (sulfur carrier)-SH + L-alanine. Cargo protein of a type 2A encapsulin nanocompartment involved in sulfur metabolism. Cysteine desulfurases mobilize the sulfur from L-cysteine to yield L-alanine, an essential step in sulfur metabolism for biosynthesis of a variety of sulfur-containing biomolecules. This Mycobacterium leprae (strain TN) protein is Probable cysteine desulfurase 1.